The sequence spans 277 residues: MELLHSGKVRDVYADGDDLILVASDRVSVYDVVLPTPIPEKGKLLTALSLWWFDQLAELVPNHVLSATDVPVELAGRAIRCRRLEMVPVECVARGYLVGGGFAEYQRTGVVSGIELPRGMVEAAALPEPIFTPSTKAPVGEHDQPMTFGEVVDKVGAETAERLRQITLDVYRRGAELAADRGILIADTKIELGWAADGTLTVGDELLTSDSSRFWPAESYQPGRAQFSYDKQYVRDWATRSGWDRRSPAPEVPDEVVDATRARYVDVYERLTGERWG.

This sequence belongs to the SAICAR synthetase family.

It carries out the reaction 5-amino-1-(5-phospho-D-ribosyl)imidazole-4-carboxylate + L-aspartate + ATP = (2S)-2-[5-amino-1-(5-phospho-beta-D-ribosyl)imidazole-4-carboxamido]succinate + ADP + phosphate + 2 H(+). Its pathway is purine metabolism; IMP biosynthesis via de novo pathway; 5-amino-1-(5-phospho-D-ribosyl)imidazole-4-carboxamide from 5-amino-1-(5-phospho-D-ribosyl)imidazole-4-carboxylate: step 1/2. This chain is Phosphoribosylaminoimidazole-succinocarboxamide synthase, found in Salinispora tropica (strain ATCC BAA-916 / DSM 44818 / JCM 13857 / NBRC 105044 / CNB-440).